Reading from the N-terminus, the 1173-residue chain is DNA polymerase catalytic subunit (1173 aa).

2 disordered regions span residues Pro-554–Gly-625 and Glu-1123–Lys-1144. Over residues Gly-564–Ala-578 the composition is skewed to gly residues. Acidic residues predominate over residues Asp-591–Asn-606. Residues Gly-607–Gly-618 are compositionally biased toward basic and acidic residues. The segment covering Glu-1123–Gly-1138 has biased composition (gly residues).

The protein belongs to the DNA polymerase type-B family.

The protein localises to the host nucleus. The enzyme catalyses DNA(n) + a 2'-deoxyribonucleoside 5'-triphosphate = DNA(n+1) + diphosphate. The chain is DNA polymerase catalytic subunit (UL54) from Rattus.